The sequence spans 348 residues: Dihydroorotase (348 aa).

H17 and H19 together coordinate Zn(2+). Substrate is bound by residues 19-21 (HLR) and N45. Zn(2+) is bound by residues K103, H140, and H178. N6-carboxylysine is present on K103. H140 is a binding site for substrate. L223 contributes to the substrate binding site. D251 is a binding site for Zn(2+). The active site involves D251. 2 residues coordinate substrate: H255 and A267.

Belongs to the metallo-dependent hydrolases superfamily. DHOase family. Class II DHOase subfamily. As to quaternary structure, homodimer. The cofactor is Zn(2+).

It carries out the reaction (S)-dihydroorotate + H2O = N-carbamoyl-L-aspartate + H(+). Its pathway is pyrimidine metabolism; UMP biosynthesis via de novo pathway; (S)-dihydroorotate from bicarbonate: step 3/3. Catalyzes the reversible cyclization of carbamoyl aspartate to dihydroorotate. The chain is Dihydroorotase from Escherichia coli O139:H28 (strain E24377A / ETEC).